The primary structure comprises 148 residues: Large ribosomal subunit protein bL9 (148 aa).

The protein belongs to the bacterial ribosomal protein bL9 family.

Functionally, binds to the 23S rRNA. The polypeptide is Large ribosomal subunit protein bL9 (Listeria monocytogenes serotype 4a (strain HCC23)).